Consider the following 522-residue polypeptide: Glucose-1-phosphate adenylyltransferase large subunit, chloroplastic/amyloplastic (522 aa).

Residues 1-62 (MSSMQFSSVL…RGPAATGAQC (62 aa)) constitute a chloroplast transit peptide. Basic and acidic residues predominate over residues 28 to 42 (SERLKVGDSSSIRHE). The interval 28–54 (SERLKVGDSSSIRHERASRRMCNGGRG) is disordered.

It belongs to the bacterial/plant glucose-1-phosphate adenylyltransferase family. In terms of assembly, heterotetramer. In terms of tissue distribution, abundantly expressed in the whole grains, a slightly less abundant expression is seen in leaves, while a low level expression is seen in the roots. A greater expression is seen in the endosperm than in the embryo and pericarp layers.

The protein localises to the plastid. Its subcellular location is the chloroplast. It is found in the amyloplast. It carries out the reaction alpha-D-glucose 1-phosphate + ATP + H(+) = ADP-alpha-D-glucose + diphosphate. It participates in glycan biosynthesis; starch biosynthesis. Its activity is regulated as follows. Insensitive to 3'phosphoglycerate and orthophosphate. Its function is as follows. This protein plays a role in synthesis of starch. It catalyzes the synthesis of the activated glycosyl donor, ADP-glucose from Glc-1-P and ATP. This is Glucose-1-phosphate adenylyltransferase large subunit, chloroplastic/amyloplastic (AGP-L) from Triticum aestivum (Wheat).